Reading from the N-terminus, the 255-residue chain is MKAYAKANIFLKLTGFDSRKYHLLESRFILLKDVFDELELVDKESDSKKEFEIISNFKCENNIIQKAYLLLSRRYNNELKELFSKKSLKLTKNIPVCAGLGGGSSDCASFLLLINETLNLKLNLQELINLSIQLGSDIAFFLSGFHSANVSSCGEIIEEFEDDIPNLKWTFPQISCQTKAVYDEFDRGIFDFQKNNNQAQIYKKLSTKELLQNFKNKELNDLFTPCATLYPKMKSYLQEDFFLSGSGSSVFKVDR.

Lys-6 is an active-site residue. An ATP-binding site is contributed by 95–105 (PVCAGLGGGSS). Asp-137 is an active-site residue.

It belongs to the GHMP kinase family. IspE subfamily.

It carries out the reaction 4-CDP-2-C-methyl-D-erythritol + ATP = 4-CDP-2-C-methyl-D-erythritol 2-phosphate + ADP + H(+). It functions in the pathway isoprenoid biosynthesis; isopentenyl diphosphate biosynthesis via DXP pathway; isopentenyl diphosphate from 1-deoxy-D-xylulose 5-phosphate: step 3/6. Catalyzes the phosphorylation of the position 2 hydroxy group of 4-diphosphocytidyl-2C-methyl-D-erythritol. The sequence is that of 4-diphosphocytidyl-2-C-methyl-D-erythritol kinase from Campylobacter jejuni subsp. jejuni serotype O:2 (strain ATCC 700819 / NCTC 11168).